Here is a 277-residue protein sequence, read N- to C-terminus: Type IV methyl-directed restriction enzyme EcoKMcrA (277 aa).

Positions 207 to 257 (CENCGKNAPFYLNDGNPYLEVHHVIPLSSGGADTTDNCVALCPNCHRELHY) constitute an HNH domain.

In terms of biological role, restriction of 5-methyl and 5-hydroxymethylcytosines at the specific DNA sequence 5'-C(me)CGG-3'. This is Type IV methyl-directed restriction enzyme EcoKMcrA from Escherichia coli (strain K12).